The primary structure comprises 350 residues: 3-dehydroquinate synthase (350 aa).

NAD(+)-binding positions include 106–110 (GVVGD), 130–131 (TS), Lys-143, and Lys-152. Residues Glu-185, His-246, and His-263 each coordinate Zn(2+).

It belongs to the sugar phosphate cyclases superfamily. Dehydroquinate synthase family. NAD(+) is required as a cofactor. Requires Co(2+) as cofactor. It depends on Zn(2+) as a cofactor.

Its subcellular location is the cytoplasm. It carries out the reaction 7-phospho-2-dehydro-3-deoxy-D-arabino-heptonate = 3-dehydroquinate + phosphate. It functions in the pathway metabolic intermediate biosynthesis; chorismate biosynthesis; chorismate from D-erythrose 4-phosphate and phosphoenolpyruvate: step 2/7. Its function is as follows. Catalyzes the conversion of 3-deoxy-D-arabino-heptulosonate 7-phosphate (DAHP) to dehydroquinate (DHQ). This is 3-dehydroquinate synthase from Clostridium perfringens (strain 13 / Type A).